The following is a 176-amino-acid chain: Ribosome rescue factor SmrB (176 aa).

The Smr domain maps to 93–168; the sequence is LDLHGYRQSE…GDAALLVLID (76 aa).

This sequence belongs to the SmrB family. Associates with collided ribosomes, but not with correctly translating polysomes.

Functionally, acts as a ribosome collision sensor. Detects stalled/collided disomes (pairs of ribosomes where the leading ribosome is stalled and a second ribosome has collided with it) and endonucleolytically cleaves mRNA at the 5' boundary of the stalled ribosome. Stalled/collided disomes form a new interface (primarily via the 30S subunits) that binds SmrB. Cleaved mRNA becomes available for tmRNA ligation, leading to ribosomal subunit dissociation and rescue of stalled ribosomes. This is Ribosome rescue factor SmrB from Shewanella sp. (strain W3-18-1).